Consider the following 329-residue polypeptide: tRNA N6-adenosine threonylcarbamoyltransferase (329 aa).

2 residues coordinate Fe cation: His107 and His111. Substrate is bound by residues 129–133 (LVSGG), Asp162, Gly175, and Asn268. Residue Asp296 participates in Fe cation binding.

Belongs to the KAE1 / TsaD family. Requires Fe(2+) as cofactor.

It localises to the cytoplasm. The enzyme catalyses L-threonylcarbamoyladenylate + adenosine(37) in tRNA = N(6)-L-threonylcarbamoyladenosine(37) in tRNA + AMP + H(+). Its function is as follows. Required for the formation of a threonylcarbamoyl group on adenosine at position 37 (t(6)A37) in tRNAs that read codons beginning with adenine. Is involved in the transfer of the threonylcarbamoyl moiety of threonylcarbamoyl-AMP (TC-AMP) to the N6 group of A37, together with TsaE and TsaB. TsaD likely plays a direct catalytic role in this reaction. This Nitratiruptor sp. (strain SB155-2) protein is tRNA N6-adenosine threonylcarbamoyltransferase.